Reading from the N-terminus, the 999-residue chain is MFVRKPATERPRLPSVGRLGLFDPHAPAHLDQLGWNTDDHVELLWSLSRAPDADAALLAMVRLADELKDDWDELNRLLLTDRPLRGRLFAVLGSSLALGDHLVAHPQSWRLLHGDVRLPSARELRETFDDAARSVDIERGASAAIPPLRDLYRDRLLVLAALDVASTVENEPVLPFVTVSAHLSDLADAALSAALIVATRTVCGDLDPRLAVIAMGKCGARELNYVSDVDVIFVGEDIEKDGRSDNLATATRVAGEMMRFAGDAFFEVDAALRPEGKRGQLVRTLDSHVAYYRRWAKTWEFQALLKARPAAGDPELGQAYIDALMPMVWTACEREDFVPEVQAMRRRVEELVPADVRSREIKLGTGGLRDVEFAVQLLQLVHGRTDESLHVASTVDALAALGEGGYVGRDDAANMTASYEFLRLLEHRLQLQRLKRTHMLPDDNDDEAYRWLARAAHIRPDGTHDAQGVLREELKRQSLRVSRLHAKLFYQPLLESVGHTALGIGEGMSAEAAERQLAALGYERPQSALAHLAALTGATGRKGRIQQILLPTLLDWLSDTPDPDAGLLAYRRLSDEHSDLRWFLGTLRDEGAVAKRLMRVLGTSAYIPELLMRAPEVIQMYADGPSGPKLLEDDRESRARALVASASRYADPVRAIAAARTLRRRELARIASADVLGMLDVIDVCKSLTAVWVAVLQAALDVVIRANTPDSGVPARIAVIGMGRLGGGELGYGSDADVMFVCEPNSGVEESVAVRWSVGVAEQVRALLGTPSADPPLEVDTGLRPEGRSGPLVRTLASYDAYYSQWAQPWEIQALLRAHRVAGDLELGERFLLMADKIRYPEGGVSASAVQEIRRIKARVDAERLPRGADPNTHTKLGRGGLADIEWTVQLLQLRYAHKVPALHNTSTLEALNAIGAAELVAEGDVELLREAWLTATRARNALVLVRGKPTDQLPGPGRQLNAVALAAGWGSDDGGEFLDNYLRVTRRAKAVVRKIFGG.

The interval 1 to 493 (MFVRKPATER…LHAKLFYQPL (493 aa)) is adenylyl removase. The segment at 498-999 (GHTALGIGEG…KAVVRKIFGG (502 aa)) is adenylyl transferase.

This sequence belongs to the GlnE family. Mg(2+) serves as cofactor.

It catalyses the reaction [glutamine synthetase]-O(4)-(5'-adenylyl)-L-tyrosine + phosphate = [glutamine synthetase]-L-tyrosine + ADP. The enzyme catalyses [glutamine synthetase]-L-tyrosine + ATP = [glutamine synthetase]-O(4)-(5'-adenylyl)-L-tyrosine + diphosphate. Its function is as follows. Involved in the regulation of glutamine synthetase GlnA, a key enzyme in the process to assimilate ammonia. When cellular nitrogen levels are high, the C-terminal adenylyl transferase (AT) inactivates GlnA by covalent transfer of an adenylyl group from ATP to specific tyrosine residue of GlnA, thus reducing its activity. Conversely, when nitrogen levels are low, the N-terminal adenylyl removase (AR) activates GlnA by removing the adenylyl group by phosphorolysis, increasing its activity. The regulatory region of GlnE binds the signal transduction protein PII (GlnB) which indicates the nitrogen status of the cell. This Mycolicibacterium smegmatis (strain ATCC 700084 / mc(2)155) (Mycobacterium smegmatis) protein is Bifunctional glutamine synthetase adenylyltransferase/adenylyl-removing enzyme.